Reading from the N-terminus, the 288-residue chain is Elongation factor Ts (288 aa).

The interval 80–83 is involved in Mg(2+) ion dislocation from EF-Tu; the sequence is TDFV.

The protein belongs to the EF-Ts family.

The protein localises to the cytoplasm. Its function is as follows. Associates with the EF-Tu.GDP complex and induces the exchange of GDP to GTP. It remains bound to the aminoacyl-tRNA.EF-Tu.GTP complex up to the GTP hydrolysis stage on the ribosome. The chain is Elongation factor Ts from Chromobacterium violaceum (strain ATCC 12472 / DSM 30191 / JCM 1249 / CCUG 213 / NBRC 12614 / NCIMB 9131 / NCTC 9757 / MK).